Reading from the N-terminus, the 199-residue chain is Protein GrpE (199 aa).

Belongs to the GrpE family. As to quaternary structure, homodimer.

The protein resides in the cytoplasm. Functionally, participates actively in the response to hyperosmotic and heat shock by preventing the aggregation of stress-denatured proteins, in association with DnaK and GrpE. It is the nucleotide exchange factor for DnaK and may function as a thermosensor. Unfolded proteins bind initially to DnaJ; upon interaction with the DnaJ-bound protein, DnaK hydrolyzes its bound ATP, resulting in the formation of a stable complex. GrpE releases ADP from DnaK; ATP binding to DnaK triggers the release of the substrate protein, thus completing the reaction cycle. Several rounds of ATP-dependent interactions between DnaJ, DnaK and GrpE are required for fully efficient folding. The protein is Protein GrpE of Fusobacterium nucleatum subsp. nucleatum (strain ATCC 25586 / DSM 15643 / BCRC 10681 / CIP 101130 / JCM 8532 / KCTC 2640 / LMG 13131 / VPI 4355).